We begin with the raw amino-acid sequence, 622 residues long: Palmitoyl-protein thioesterase-dolichyl pyrophosphate phosphatase fusion 1 (622 aa).

The signal sequence occupies residues 1-24 (MLSCSSFLIFFLFSWVLLPMKSFA). Residues 25 to 405 (IPIISLDKVR…NVSEEKGPKS (381 aa)) lie on the Lumenal side of the membrane. Cys-106 and Cys-138 are joined by a disulfide. Residue Ser-125 is part of the active site. A glycan (N-linked (GlcNAc...) asparagine) is linked at Asn-223. Asp-245 is an active-site residue. Asn-260 carries N-linked (GlcNAc...) asparagine glycosylation. The active site involves His-298. Asn-396 carries N-linked (GlcNAc...) asparagine glycosylation. The helical transmembrane segment at 406 to 426 (FANLAFITIFSHFFYHIDDMW) threads the bilayer. Residues 427-428 (RS) lie on the Cytoplasmic side of the membrane. The helical transmembrane segment at 429-449 (TLGLFSLIPQIIGIIYLTVMF) threads the bilayer. Topologically, residues 450–488 (TGRELDTFMQFGGQVVNEFINYVVKVSLKYPRPADIEYG) are lumenal. A helical transmembrane segment spans residues 489-511 (VGYGMPSSHSQFMGFFSAYMIAW). Over 512–519 (DYKYRRSQ) the chain is Cytoplasmic. The chain crosses the membrane as a helical span at residues 520-540 (CFSMLSFAKYAIYLTLSTFVC). The Lumenal segment spans residues 541–552 (SSRYLLDFHYLT). Residues 553-573 (QVVYGYMIGFGVGLFWVYLVG) form a helical membrane-spanning segment. The Cytoplasmic portion of the chain corresponds to 574-622 (KLRSLGVTKWLLSLPPLQFFYIKDTIPHSKDNHKRQWLESKQFKNQKSN).

It in the N-terminal section; belongs to the palmitoyl-protein thioesterase family. This sequence in the C-terminal section; belongs to the dolichyldiphosphatase family. Proteolytically cleaved, possibly by krp1.

It localises to the vacuole. It is found in the endoplasmic reticulum membrane. The catalysed reaction is S-hexadecanoyl-L-cysteinyl-[protein] + H2O = L-cysteinyl-[protein] + hexadecanoate + H(+). It catalyses the reaction a di-trans,poly-cis-dolichyl diphosphate + H2O = a di-trans,poly-cis-dolichyl phosphate + phosphate + H(+). Functionally, essential protein. Removes thioester-linked fatty acyl groups such as palmitate from modified cysteine residues in proteins or peptides during vacuolar degradation. Required for efficient N-glycosylation. Necessary for maintaining optimal levels of dolichol-linked oligosaccharides. This is Palmitoyl-protein thioesterase-dolichyl pyrophosphate phosphatase fusion 1 (pdf1) from Schizosaccharomyces pombe (strain 972 / ATCC 24843) (Fission yeast).